The chain runs to 222 residues: Large ribosomal subunit protein uL4 (222 aa).

A disordered region spans residues 67–87 (QKGTGNARAGSKRTNVRRGGG).

Belongs to the universal ribosomal protein uL4 family. As to quaternary structure, part of the 50S ribosomal subunit.

In terms of biological role, one of the primary rRNA binding proteins, this protein initially binds near the 5'-end of the 23S rRNA. It is important during the early stages of 50S assembly. It makes multiple contacts with different domains of the 23S rRNA in the assembled 50S subunit and ribosome. Forms part of the polypeptide exit tunnel. The chain is Large ribosomal subunit protein uL4 from Rhodopirellula baltica (strain DSM 10527 / NCIMB 13988 / SH1).